Here is a 572-residue protein sequence, read N- to C-terminus: Glutamate--tRNA ligase (572 aa).

A 'HIGH' region motif is present at residues proline 112 to asparagine 122.

The protein belongs to the class-I aminoacyl-tRNA synthetase family. Glutamate--tRNA ligase type 2 subfamily.

It is found in the cytoplasm. It catalyses the reaction tRNA(Glu) + L-glutamate + ATP = L-glutamyl-tRNA(Glu) + AMP + diphosphate. In terms of biological role, catalyzes the attachment of glutamate to tRNA(Glu) in a two-step reaction: glutamate is first activated by ATP to form Glu-AMP and then transferred to the acceptor end of tRNA(Glu). This chain is Glutamate--tRNA ligase, found in Methanocella arvoryzae (strain DSM 22066 / NBRC 105507 / MRE50).